The chain runs to 336 residues: Hdr-like menaquinol oxidoreductase cytochrome b-like subunit (336 aa).

6 consecutive transmembrane segments (helical) span residues 4 to 24, 60 to 80, 102 to 122, 145 to 165, 184 to 204, and 232 to 252; these read ALYIFYALPYICFAIFVIGTI, IDSPSSKFWAFVRVLFVVFLF, WLWLFAILFHYSLLVIVIRHL, VAIVPPLLMTGVIALVALAFL, HLILFFMAVILVSGLLMRYII, and LHWLFLIHFTFVCITIAYIPF.

It localises to the cell membrane. In terms of biological role, has menaquinol-oxidizing activity. The HmeC and HmeD subunits may together mediate electron transfer from menaquinol to an unidentified electron acceptor on the cytoplasmic side of the membrane. The protein is Hdr-like menaquinol oxidoreductase cytochrome b-like subunit (hmeC) of Archaeoglobus profundus (strain DSM 5631 / JCM 9629 / NBRC 100127 / Av18).